The following is a 763-amino-acid chain: Phosphoglycerol transferase I (763 aa).

Helical transmembrane passes span 1-21 (MSELLSVALFLASVLIYAWKA), 26-46 (WWFAATLTVLGLFVILNITLY), 77-97 (ILPGIGIALALVAVFGALGWI), and 108-128 (VGYSLLALLLALGSVDASPAF).

It belongs to the OpgB family.

The protein localises to the cell inner membrane. The enzyme catalyses a phosphatidylglycerol + a membrane-derived-oligosaccharide D-glucose = a 1,2-diacyl-sn-glycerol + a membrane-derived-oligosaccharide 6-(glycerophospho)-D-glucose.. Its pathway is glycan metabolism; osmoregulated periplasmic glucan (OPG) biosynthesis. In terms of biological role, transfers a phosphoglycerol residue from phosphatidylglycerol to the membrane-bound nascent glucan backbones. This is Phosphoglycerol transferase I from Salmonella newport (strain SL254).